The sequence spans 555 residues: Tau-cadinol synthase (555 aa).

(2E,6E)-farnesyl diphosphate-binding residues include arginine 270, aspartate 307, aspartate 311, arginine 448, and aspartate 451. Positions 307 and 311 each coordinate Mg(2+). A DDXXD motif motif is present at residues 307–311 (DDTYD). Positions 451, 455, and 459 each coordinate Mg(2+).

The protein belongs to the terpene synthase family. The cofactor is Mg(2+).

The catalysed reaction is (2E,6E)-farnesyl diphosphate + H2O = tau-cadinol + diphosphate. It carries out the reaction (2E,6E)-farnesyl diphosphate = (+)-gamma-cadinene + diphosphate. It participates in secondary metabolite biosynthesis; terpenoid biosynthesis. Functionally, sesquiterpene synthase that catalyzes the formation of sesquiterpenes and sesquiterpenoid alcohols. Converts farnesyl diphosphate (FPP) to tau-cadinol. Converts FPP to gamma-cadinene. Tau-cadinol is the major product. The chain is Tau-cadinol synthase from Lavandula angustifolia (Lavender).